The primary structure comprises 199 residues: HTH-type transcriptional regulator BetI (199 aa).

The 61-residue stretch at 8 to 68 folds into the HTH tetR-type domain; sequence EIRKPQLVKA…ETMREILRQL (61 aa). Positions 31 to 50 form a DNA-binding region, H-T-H motif; the sequence is SISLISKEAGVSTGIINHYF.

It functions in the pathway amine and polyamine biosynthesis; betaine biosynthesis via choline pathway [regulation]. In terms of biological role, repressor involved in the biosynthesis of the osmoprotectant glycine betaine. It represses transcription of the choline transporter BetT and the genes of BetAB involved in the synthesis of glycine betaine. The sequence is that of HTH-type transcriptional regulator BetI from Vibrio parahaemolyticus serotype O3:K6 (strain RIMD 2210633).